Reading from the N-terminus, the 93-residue chain is Small ribosomal subunit protein uS19 (93 aa).

The protein belongs to the universal ribosomal protein uS19 family.

Its function is as follows. Protein S19 forms a complex with S13 that binds strongly to the 16S ribosomal RNA. This is Small ribosomal subunit protein uS19 from Pediococcus pentosaceus (strain ATCC 25745 / CCUG 21536 / LMG 10740 / 183-1w).